Reading from the N-terminus, the 310-residue chain is 26S proteasome non-ATPase regulatory subunit 14 (310 aa).

One can recognise an MPN domain in the interval 31 to 166 (VYISSLALLK…IDAFRLINAN (136 aa)). Zn(2+)-binding residues include H113, H115, and D126. Residues 113–126 (HSHPGFGCWLSGVD) carry the JAMM motif motif. Phosphoserine is present on residues S150 and S224. T266 is modified (phosphothreonine).

Belongs to the peptidase M67A family. PSMD14 subfamily. Component of the 19S proteasome regulatory particle complex. The 26S proteasome consists of a 20S core particle (CP) and two 19S regulatory subunits (RP). The regulatory particle is made of a lid composed of 9 subunits including PSMD4, a base containing 6 ATPases and few additional components. Within the complex, PSMD4 interacts with subunit PSMD7 through their respective MPN domain. Interacts with TXNL1. Widely expressed. Highest levels in heart and skeletal muscle.

Functionally, component of the 26S proteasome, a multiprotein complex involved in the ATP-dependent degradation of ubiquitinated proteins. This complex plays a key role in the maintenance of protein homeostasis by removing misfolded or damaged proteins, which could impair cellular functions, and by removing proteins whose functions are no longer required. Therefore, the proteasome participates in numerous cellular processes, including cell cycle progression, apoptosis, or DNA damage repair. The PSMD14 subunit is a metalloprotease that specifically cleaves 'Lys-63'-linked polyubiquitin chains within the complex. Plays a role in response to double-strand breaks (DSBs): acts as a regulator of non-homologous end joining (NHEJ) by cleaving 'Lys-63'-linked polyubiquitin, thereby promoting retention of JMJD2A/KDM4A on chromatin and restricting TP53BP1 accumulation. Also involved in homologous recombination repair by promoting RAD51 loading. The polypeptide is 26S proteasome non-ATPase regulatory subunit 14 (PSMD14) (Homo sapiens (Human)).